The following is a 433-amino-acid chain: Probable non-inhibitory serpin-Z5 (433 aa).

Residues methionine 1–threonine 12 show a composition bias toward basic and acidic residues. The segment at methionine 1–serine 43 is disordered. A compositionally biased stretch (basic residues) spans threonine 23 to arginine 36. An RCL region spans residues glycine 380–phenylalanine 404.

This sequence belongs to the serpin family. As to expression, weakly expressed during seedling development.

The chain is Probable non-inhibitory serpin-Z5 from Arabidopsis thaliana (Mouse-ear cress).